We begin with the raw amino-acid sequence, 296 residues long: 4-hydroxy-tetrahydrodipicolinate synthase (296 aa).

Thr49 serves as a coordination point for pyruvate. Residue Tyr137 is the Proton donor/acceptor of the active site. Lys165 acts as the Schiff-base intermediate with substrate in catalysis. Residue Ile207 participates in pyruvate binding.

Belongs to the DapA family. In terms of assembly, homotetramer; dimer of dimers.

It is found in the cytoplasm. It catalyses the reaction L-aspartate 4-semialdehyde + pyruvate = (2S,4S)-4-hydroxy-2,3,4,5-tetrahydrodipicolinate + H2O + H(+). The protein operates within amino-acid biosynthesis; L-lysine biosynthesis via DAP pathway; (S)-tetrahydrodipicolinate from L-aspartate: step 3/4. Functionally, catalyzes the condensation of (S)-aspartate-beta-semialdehyde [(S)-ASA] and pyruvate to 4-hydroxy-tetrahydrodipicolinate (HTPA). This Afipia carboxidovorans (strain ATCC 49405 / DSM 1227 / KCTC 32145 / OM5) (Oligotropha carboxidovorans) protein is 4-hydroxy-tetrahydrodipicolinate synthase.